Here is a 234-residue protein sequence, read N- to C-terminus: LexA repressor (234 aa).

Positions 1–29 (MSDAANPEGHKRSLPGRPPGIRADSSGLT) are disordered. The segment at residues 52-72 (MREIGQAVGLSSTSSVAHQLM) is a DNA-binding region (H-T-H motif). Residues 90–109 (YEVRGSDQAASVQPTDTAGK) form a disordered region. Residues Ser158 and Lys195 each act as for autocatalytic cleavage activity in the active site.

Belongs to the peptidase S24 family. In terms of assembly, homodimer.

It catalyses the reaction Hydrolysis of Ala-|-Gly bond in repressor LexA.. Functionally, represses a number of genes involved in the response to DNA damage (SOS response), including recA and lexA. In the presence of single-stranded DNA, RecA interacts with LexA causing an autocatalytic cleavage which disrupts the DNA-binding part of LexA, leading to derepression of the SOS regulon and eventually DNA repair. The sequence is that of LexA repressor from Streptomyces coelicolor (strain ATCC BAA-471 / A3(2) / M145).